The following is a 218-amino-acid chain: N-(5'-phosphoribosyl)anthranilate isomerase (218 aa).

Belongs to the TrpF family.

The catalysed reaction is N-(5-phospho-beta-D-ribosyl)anthranilate = 1-(2-carboxyphenylamino)-1-deoxy-D-ribulose 5-phosphate. It participates in amino-acid biosynthesis; L-tryptophan biosynthesis; L-tryptophan from chorismate: step 3/5. This Desulfatibacillum aliphaticivorans protein is N-(5'-phosphoribosyl)anthranilate isomerase.